The following is a 467-amino-acid chain: Asparagine--tRNA ligase (467 aa).

The protein belongs to the class-II aminoacyl-tRNA synthetase family. In terms of assembly, homodimer.

The protein localises to the cytoplasm. The catalysed reaction is tRNA(Asn) + L-asparagine + ATP = L-asparaginyl-tRNA(Asn) + AMP + diphosphate + H(+). The polypeptide is Asparagine--tRNA ligase (Actinobacillus pleuropneumoniae serotype 5b (strain L20)).